The following is a 704-amino-acid chain: Elongation factor G 1 (704 aa).

The tr-type G domain occupies 8 to 290; that stretch reads ERYRNIGICA…CVVEYMPAPT (283 aa). Residues 17-24, 88-92, and 142-145 contribute to the GTP site; these read AHVDAGKT, DTPGH, and NKMD.

Belongs to the TRAFAC class translation factor GTPase superfamily. Classic translation factor GTPase family. EF-G/EF-2 subfamily.

The protein localises to the cytoplasm. Its function is as follows. Catalyzes the GTP-dependent ribosomal translocation step during translation elongation. During this step, the ribosome changes from the pre-translocational (PRE) to the post-translocational (POST) state as the newly formed A-site-bound peptidyl-tRNA and P-site-bound deacylated tRNA move to the P and E sites, respectively. Catalyzes the coordinated movement of the two tRNA molecules, the mRNA and conformational changes in the ribosome. In Pseudoalteromonas translucida (strain TAC 125), this protein is Elongation factor G 1.